A 364-amino-acid chain; its full sequence is Fructose-bisphosphate aldolase B (364 aa).

The substrate site is built by R56 and K147. E188 (proton acceptor) is an active-site residue. K230 serves as the catalytic Schiff-base intermediate with dihydroxyacetone-P.

The protein belongs to the class I fructose-bisphosphate aldolase family. As to quaternary structure, homotetramer.

The protein resides in the cytoplasm. Its subcellular location is the cytoskeleton. It localises to the microtubule organizing center. It is found in the centrosome. The protein localises to the centriolar satellite. The catalysed reaction is beta-D-fructose 1,6-bisphosphate = D-glyceraldehyde 3-phosphate + dihydroxyacetone phosphate. It functions in the pathway carbohydrate degradation; glycolysis; D-glyceraldehyde 3-phosphate and glycerone phosphate from D-glucose: step 4/4. The chain is Fructose-bisphosphate aldolase B (aldob) from Sparus aurata (Gilthead sea bream).